We begin with the raw amino-acid sequence, 411 residues long: Carbohydrate sulfotransferase 1 (411 aa).

Over Met-1 to Gln-2 the chain is Cytoplasmic. Residues Cys-3 to Ile-23 traverse the membrane as a helical; Signal-anchor for type II membrane protein segment. At Arg-24 to Ser-411 the chain is on the lumenal side. An N-linked (GlcNAc...) asparagine glycan is attached at Asn-56. A 3'-phosphoadenylyl sulfate-binding site is contributed by Thr-69–Phe-75. Residues Asn-145 and Asn-189 are each glycosylated (N-linked (GlcNAc...) asparagine). Arg-234–Ser-242 serves as a coordination point for 3'-phosphoadenylyl sulfate. A glycan (N-linked (GlcNAc...) asparagine) is linked at Asn-334. Positions Arg-337–Asp-339 match the Cell attachment site motif.

Belongs to the sulfotransferase 1 family. Gal/GlcNAc/GalNAc subfamily. As to expression, widely expressed at low level. Expressed in brain and skeletal muscle. Expressed by high endothelial cells (HEVs) and leukocytes.

The protein resides in the golgi apparatus membrane. It catalyses the reaction 3'-phosphoadenylyl sulfate + keratan = adenosine 3',5'-bisphosphate + keratan 6'-sulfate.. Its pathway is glycan metabolism. Its function is as follows. Sulfotransferase that utilizes 3'-phospho-5'-adenylyl sulfate (PAPS) as sulfonate donor to catalyze the transfer of sulfate to position 6 of internal galactose (Gal) residues of keratan. Cooperates with B4GALT4 and B3GNT7 glycosyltransferases and CHST6 sulfotransferase to construct and elongate disulfated disaccharide unit [-&gt;3(6-sulfoGalbeta)1-&gt;4(6-sulfoGlcNAcbeta)1-&gt;] within keratan sulfate polymer. Has a preference for sulfating keratan sulfate, but it also transfers sulfate to the unsulfated polymer. Involved in biosynthesis of phosphacan, a major keratan sulfate proteoglycan in the developing brain. Involved in biosynthesis of 6-sulfoGalbeta-containing O-linked glycans in high endothelial venules of lymph nodes. May act in a synergistic manner with CHST4 to generate sialyl 6',6-disulfo Lewis X motif, a recognition determinant for immune cell receptors implicated in leukocyte trafficking. Catalyzes sulfation of N-acetyllactosamine (LacNAc) oligosaccharides with highest efficiency for sialylated LacNAc structures. The polypeptide is Carbohydrate sulfotransferase 1 (Homo sapiens (Human)).